The primary structure comprises 142 residues: Putative nickel-responsive regulator (142 aa).

Residues H77, H88, H90, and C96 each contribute to the Ni(2+) site.

It belongs to the transcriptional regulatory CopG/NikR family. In terms of assembly, homotetramer. Ni(2+) is required as a cofactor.

Functionally, transcriptional regulator. The polypeptide is Putative nickel-responsive regulator (Halobacterium salinarum (strain ATCC 700922 / JCM 11081 / NRC-1) (Halobacterium halobium)).